A 313-amino-acid chain; its full sequence is MATQQPCRPKSKPPACHVRLPPEPPLKLKVVGLFKSSSFQVSKTIAETLKTSYPYRFEDPVIVPLQEFAWDQFLEEKKRELKGETWVYSSYVMCFVNDQLLGNAFDLKKWAQKVWDVIDVRPSALYEALTLDYATKFLKDTKHDFVYLDICIDLSPIGRLIFELYCDACPRTCTNFQVLCTGTSGFSERGTKLHYKDSIFHRVVQNGWIQGGDIVQGRGDDGESIYGPTFEDENFSIPHNKRGVLGMVNKGHHTNGSQFYITLQAAPYLDKKYVAFGQLIEGTHVLKQLELVPTENERPLLLCSIADSGVLYT.

The region spanning 147 to 310 (YLDICIDLSP…LLCSIADSGV (164 aa)) is the PPIase cyclophilin-type domain.

This sequence belongs to the cyclophilin-type PPIase family.

In terms of biological role, probable inactive PPIase with no peptidyl-prolyl cis-trans isomerase activity. This Mus musculus (Mouse) protein is Probable inactive peptidyl-prolyl cis-trans isomerase-like 6.